Here is a 368-residue protein sequence, read N- to C-terminus: Ethanol acetyltransferase 1 (368 aa).

The transit peptide at 1-21 directs the protein to the mitochondrion; the sequence is MFLSLRPSLSVSRLAVVRRAY. The AB hydrolase-1 domain occupies 67 to 171; sequence PIIFFHGLLG…IIDNAPEPQP (105 aa). Active-site charge relay system residues include Ser140, Asp164, and His315. Positions 344 to 368 are disordered; sequence RNKDPNNYMQTQNSISNSDTMGQSL. A compositionally biased stretch (polar residues) spans 348 to 368; it reads PNNYMQTQNSISNSDTMGQSL.

The protein belongs to the AB hydrolase superfamily.

Its subcellular location is the mitochondrion. The enzyme catalyses ethanol + acetyl-CoA = ethyl acetate + CoA. The catalysed reaction is acetyl-CoA + H2O = acetate + CoA + H(+). It catalyses the reaction ethyl acetate + H2O = ethanol + acetate + H(+). Its function is as follows. Alcohol acetyltransferase that catalyzes the synthesis of ethyl acetate from ethanol and acetyl-CoA. Can also function as a thioesterase by hydrolyzing acetyl-CoA in the absence of ethanol, as well as esterase hydrolyzing ethyl acetate. This Kluyveromyces lactis (strain ATCC 8585 / CBS 2359 / DSM 70799 / NBRC 1267 / NRRL Y-1140 / WM37) (Yeast) protein is Ethanol acetyltransferase 1 (EAT1).